The sequence spans 936 residues: Lon protease homolog, mitochondrial (936 aa).

A mitochondrion-targeting transit peptide spans 1–40; that stretch reads MYATRAIARRLERHAARCKGAHVARAVRGARARTTSAPRA. A disordered region spans residues 65-95; the sequence is AFVSSVDGDGSTGSTGSSSSSSSSAFGDSAS. Low complexity predominate over residues 66 to 95; sequence FVSSVDGDGSTGSTGSSSSSSSSAFGDSAS. Positions 112–352 constitute a Lon N-terminal domain; sequence VLAVPLPRRP…ATLELLKKEV (241 aa). 507–514 contacts ATP; the sequence is GPPGVGKT. Residues 748–932 form the Lon proteolytic domain; it reads VTPPGVVTGL…DEVYRQALDW (185 aa). Residues serine 838 and lysine 881 contribute to the active site.

This sequence belongs to the peptidase S16 family. In terms of assembly, homohexamer or homoheptamer. Organized in a ring with a central cavity.

Its subcellular location is the mitochondrion matrix. The catalysed reaction is Hydrolysis of proteins in presence of ATP.. In terms of biological role, ATP-dependent serine protease that mediates the selective degradation of misfolded, unassembled or oxidatively damaged polypeptides as well as certain short-lived regulatory proteins in the mitochondrial matrix. May also have a chaperone function in the assembly of inner membrane protein complexes. Participates in the regulation of mitochondrial gene expression and in the maintenance of the integrity of the mitochondrial genome. Binds to mitochondrial DNA in a site-specific manner. The sequence is that of Lon protease homolog, mitochondrial from Ostreococcus lucimarinus (strain CCE9901).